The following is a 112-amino-acid chain: ATP synthase subunit c (112 aa).

2 consecutive transmembrane segments (helical) span residues 36–56 (FSVLAAGLGLGVAALGGAIGM) and 81–101 (MFIALAMIEAQVIYALVIALI).

This sequence belongs to the ATPase C chain family. In terms of assembly, F-type ATPases have 2 components, F(1) - the catalytic core - and F(0) - the membrane proton channel. F(1) has five subunits: alpha(3), beta(3), gamma(1), delta(1), epsilon(1). F(0) has three main subunits: a(1), b(2) and c(10-14). The alpha and beta chains form an alternating ring which encloses part of the gamma chain. F(1) is attached to F(0) by a central stalk formed by the gamma and epsilon chains, while a peripheral stalk is formed by the delta and b chains.

The protein resides in the cell inner membrane. Functionally, f(1)F(0) ATP synthase produces ATP from ADP in the presence of a proton or sodium gradient. F-type ATPases consist of two structural domains, F(1) containing the extramembraneous catalytic core and F(0) containing the membrane proton channel, linked together by a central stalk and a peripheral stalk. During catalysis, ATP synthesis in the catalytic domain of F(1) is coupled via a rotary mechanism of the central stalk subunits to proton translocation. The sequence is that of ATP synthase subunit c from Campylobacter jejuni subsp. jejuni serotype O:2 (strain ATCC 700819 / NCTC 11168).